Reading from the N-terminus, the 2435-residue chain is MGFLHQLQLLLWKNVTLKRRSPWVLAFEIFIPLVLFFILLGLRQKKPTISVKEAFYTAAPLTSAGILPVMQSLCPDGQRDEFGFLQYANSTVTQLLERLDRVVEEGNLFDPARPSLGSELEALRQHLEALSAGPGTSGSHLDRSTVSSFSLDSVARNPQELWRFLTQNLSLPNSTAQALLAARVDPPEVYHLLFGPSSALDSQSGLHKGQEPWSRLGGNPLFRMEELLLAPALLEQLTCTPGSGELGRILTVPESQKGALQGYRDAVCSGQAAARARRFSGLSAELRNQLDVAKVSQQLGLDAPNGSDSSPQAPPPRRLQALLGDLLDAQKVLQDVDVLSALALLLPQGACTGRTPGPPASGAGGAANGTGAGAVMGPNATAEEGAPSAAALATPDTLQGQCSAFVQLWAGLQPILCGNNRTIEPEALRRGNMSSLGFTSKEQRNLGLLVHLMTSNPKILYAPAGSEVDRVILKANETFAFVGNVTHYAQVWLNISAEIRSFLEQGRLQQHLRWLQQYVAELRLHPEALNLSLDELPPALRQDNFSLPSGMALLQQLDTIDNAACGWIQFMSKVSVDIFKGFPDEESIVNYTLNQAYQDNVTVFASVIFQTRKDGSLPPHVHYKIRQNSSFTEKTNEIRRAYWRPGPNTGGRFYFLYGFVWIQDMMERAIIDTFVGHDVVEPGSYVQMFPYPCYTRDDFLFVIEHMMPLCMVISWVYSVAMTIQHIVAEKEHRLKEVMKTMGLNNAVHWVAWFITGFVQLSISVTALTAILKYGQVLMHSHVVIIWLFLAVYAVATIMFCFLVSVLYSKAKLASACGGIIYFLSYVPYMYVAIREEVAHDKITAFEKCIASLMSTTAFGLGSKYFALYEVAGVGIQWHTFSQSPVEGDDFNLLLAVTMLMVDAVVYGILTWYIEAVHPGMYGLPRPWYFPLQKSYWLGSGRTEAWEWSWPWARTPRLSVMEEDQACAMESRRFEETRGMEEEPTHLPLVVCVDKLTKVYKDDKKLALNKLSLNLYENQVVSFLGHNGAGKTTTMSILTGLFPPTSGSATIYGHDIRTEMDEIRKNLGMCPQHNVLFDRLTVEEHLWFYSRLKSMAQEEIRREMDKMIEDLELSNKRHSLVQTLSGGMKRKLSVAIAFVGGSRAIILDEPTAGVDPYARRAIWDLILKYKPGRTILLSTHHMDEADLLGDRIAIISHGKLKCCGSPLFLKGTYGDGYRLTLVKRPAEPGGPQEPGLASSPPGRAPLSSCSELQVSQFIRKHVASCLLVSDTSTELSYILPSEAAKKGAFERLFQHLERSLDALHLSSFGLMDTTLEEVFLKVSEEDQSLENSEADVKESRKDVLPGAEGPASGEGHAGNLARCSELTQSQASLQSASSVGSARGDEGAGYTDVYGDYRPLFDNPQDPDNVSLQEVEAEALSRVGQGSRKLDGGWLKVRQFHGLLVKRFHCARRNSKALFSQILLPAFFVCVAMTVALSVPEIGDLPPLVLSPSQYHNYTQPRGNFIPYANEERREYRLRLSPDASPQQLVSTFRLPSGVGATCVLKSPANGSLGPTLNLSSGESRLLAARFFDSMCLESFTQGLPLSNFVPPPPSPAPSDSPASPDEDLQAWNVSLPPTAGPEMWTSAPSLPRLVREPVRCTCSAQGTGFSCPSSVGGHPPQMRVVTGDILTDITGHNVSEYLLFTSDRFRLHRYGAITFGNVLKSIPASFGTRAPPMVRKIAVRRAAQVFYNNKGYHSMPTYLNSLNNAILRANLPKSKGNPAAYGITVTNHPMNKTSASLSLDYLLQGTDVVIAIFIIVAMSFVPASFVVFLVAEKSTKAKHLQFVSGCNPIIYWLANYVWDMLNYLVPATCCVIILFVFDLPAYTSPTNFPAVLSLFLLYGWSITPIMYPASFWFEVPSSAYVFLIVINLFIGITATVATFLLQLFEHDKDLKVVNSYLKSCFLIFPNYNLGHGLMEMAYNEYINEYYAKIGQFDKMKSPFEWDIVTRGLVAMAVEGVVGFLLTIMCQYNFLRRPQRMPVSTKPVEDDVDVASERQRVLRGDADNDMVKIENLTKVYKSRKIGRILAVDRLCLGVRPGECFGLLGVNGAGKTSTFKMLTGDESTTGGEAFVNGHSVLKELLQVQQSLGYCPQCDALFDELTAREHLQLYTRLRGISWKDEARVVKWALEKLELTKYADKPAGTYSGGNKRKLSTAIALIGYPAFIFLDEPTTGMDPKARRFLWNLILDLIKTGRSVVLTSHSMEECEALCTRLAIMVNGRLRCLGSIQHLKNRFGDGYMITVRTKSSQSVKDVVRFFNRNFPEAMLKERHHTKVQYQLKSEHISLAQVFSKMEQVSGVLGIEDYSVSQTTLDNVFVNFAKKQSDNLEQQETEPPSALQSPLGCLLSLLRPRSAPTELRALVADEPEDLDTEDEGLISFEEERAQLSFNTDTLC.

The N-linked (GlcNAc...) asparagine glycan is linked to Asn14. A run of 2 helical transmembrane segments spans residues 22–42 (PWVLAFEIFIPLVLFFILLGL) and 54–74 (AFYTAAPLTSAGILPVMQSLC). Residues Asn89, Asn168, and Asn173 are each glycosylated (N-linked (GlcNAc...) asparagine). Gln271 carries the N5-methylglutamine modification. 13 N-linked (GlcNAc...) asparagine glycosylation sites follow: Asn305, Asn368, Asn379, Asn420, Asn432, Asn476, Asn484, Asn494, Asn530, Asn544, Asn590, Asn600, and Asn628. 6 helical membrane-spanning segments follow: residues 699–719 (FLFVIEHMMPLCMVISWVYSV), 750–770 (VAWFITGFVQLSISVTALTAI), 782–802 (VVIIWLFLAVYAVATIMFCFL), 813–833 (ASACGGIIYFLSYVPYMYVAI), 857–877 (AFGLGSKYFALYEVAGVGIQW), and 893–913 (LLAVTMLMVDAVVYGILTWYI). The 232-residue stretch at 990–1221 (VCVDKLTKVY…YGDGYRLTLV (232 aa)) folds into the ABC transporter 1 domain. Residue 1024-1031 (GHNGAGKT) participates in ATP binding. Disordered stretches follow at residues 1223–1243 (RPAEPGGPQEPGLASSPPGRA) and 1325–1357 (DQSLENSEADVKESRKDVLPGAEGPASGEGHAG). Phosphoserine occurs at positions 1238, 1327, and 1331. The segment covering 1333 to 1342 (ADVKESRKDV) has biased composition (basic and acidic residues). N-linked (GlcNAc...) asparagine glycosylation is present at Asn1408. The helical transmembrane segment at 1456-1476 (ALFSQILLPAFFVCVAMTVAL) threads the bilayer. Residues Asn1496, Asn1549, and Asn1557 are each glycosylated (N-linked (GlcNAc...) asparagine). Residues 1586 to 1610 (SNFVPPPPSPAPSDSPASPDEDLQA) form a disordered region. Pro residues predominate over residues 1589–1598 (VPPPPSPAPS). 3 N-linked (GlcNAc...) asparagine glycosylation sites follow: Asn1612, Asn1677, and Asn1775. The next 5 membrane-spanning stretches (helical) occupy residues 1792–1812 (VVIAIFIIVAMSFVPASFVVF), 1841–1861 (VWDMLNYLVPATCCVIILFVF), 1872–1892 (FPAVLSLFLLYGWSITPIMYP), 1905–1925 (VFLIVINLFIGITATVATFLL), and 1991–2011 (GLVAMAVEGVVGFLLTIMCQY). Positions 2050–2285 (VKIENLTKVY…FGDGYMITVR (236 aa)) constitute an ABC transporter 2 domain. Asn2054 carries an N-linked (GlcNAc...) asparagine glycan. Position 2087 to 2094 (2087 to 2094 (GVNGAGKT)) interacts with ATP. Thr2412 bears the Phosphothreonine mark.

This sequence belongs to the ABC transporter superfamily. ABCA family. Post-translationally, methylated at Gln-271 by N6AMT1. In terms of tissue distribution, highly expressed in the brain,peripheral blood leukocytes and ovary, whereas lower levels of expression is observed in kidney and liver. Weakly expressed in brain and highly in peripheral blood leukocytes.

It localises to the endosome membrane. It is found in the lysosome membrane. Functionally, probable lipid transporter that modulates cholesterol sequestration in the late endosome/lysosome by regulating the intracellular sphingolipid metabolism, in turn participates in cholesterol homeostasis. May alter the transbilayer distribution of ceramide in the intraluminal membrane lipid bilayer, favoring its retention in the outer leaflet that results in increased acid ceramidase activity in the late endosome/lysosome, facilitating ceramide deacylation to sphingosine leading to the sequestration of free cholesterol in lysosomes. In addition regulates amyloid-beta production either by activating a signaling pathway that regulates amyloid precursor protein transcription through the modulation of sphingolipid metabolism or through its role in gamma-secretase processing of APP. May play a role in myelin formation. This is ATP-binding cassette sub-family A member 2 from Homo sapiens (Human).